A 749-amino-acid polypeptide reads, in one-letter code: MAGCIPEEKTYRRFLELFLGEFRGPCGGGEPEPEPESEPEPEPEAELVAAEAAEASGEEPGEDAATVEATEEGEQDQDPEPEDEAVEEETATEGEEEEEEEAAAPGHSAVPPPPQPQLPPLPPLPRPLSERITREEVEGESLDLCLQQLYKYNCPSFLAAALARATSDEVLQSDLSAHCIPKETDGTEGTVEIETVKLARSVFSKLHEICCSWVKDFPLRRRPQIYYETSIHAIKNMRRKMEDKHVCIPDFNMLFNLEDQEEQAYFAVFDGHGGVDAAIYASVHLHVNLVRQEMFPHDPAEALCRAFRVTDERFVQKAARESLRCGTTGVVTFIRGNMLHVAWVGDSQVMLVRKGQAVELMKPHKPDREDEKQRIEALGGCVVWFGAWRVNGSLSVSRAIGDAEHKPYICGDADSASTVLDGTEDYLILACDGFYDTVNPDEAVKVVSDHLKENNGDSSMVAHKLVASARDAGSSDNITVIVVFLRDMNKAVNVSEESEWTENSFQGGQEDGGDDKETHGECKRPWPQHQCSAPADLGYEGRVDSFTDRTSLSPGPQINVLEDPDYLDLTQIEASKPHSTQFLPPVEMIGPGAPKKDLNELIMEERSVKSSLPERSGAGEPRVSFNLGSTGQQICRMENLSPVSSGLENEQFKSRGKTASRLYHLRHHYSKRQRGFRFNPKFYSFLSAREPSHKIGISLSSLTRSGKRNKMLRSSLPWRENSWEGYSGNVKIRKRNDIPCPDFPWSYKI.

The interval 21–128 is disordered; that stretch reads EFRGPCGGGE…PPLPPLPRPL (108 aa). A run of 3 repeats spans residues 31-32, 33-34, and 35-36. The tract at residues 31–44 is 7 X 2 AA tandem repeats of P-E; that stretch reads PEPEPESEPEPEPE. Residues 31-45 are compositionally biased toward acidic residues; sequence PEPEPESEPEPEPEA. Residues 37–38 form a 4; approximate repeat; it reads SE. 3 tandem repeats follow at residues 39–40, 41–42, and 43–44. A compositionally biased stretch (low complexity) spans 46-55; that stretch reads ELVAAEAAEA. The span at 69–102 shows a compositional bias: acidic residues; it reads ATEEGEQDQDPEPEDEAVEEETATEGEEEEEEEA. Positions 110-126 are enriched in pro residues; the sequence is VPPPPQPQLPPLPPLPR. The 262-residue stretch at 224 to 485 folds into the PPM-type phosphatase domain; it reads QIYYETSIHA…DNITVIVVFL (262 aa). The Mn(2+) site is built by Asp-270, Gly-271, Asp-432, and Asp-476. The tract at residues 495–537 is disordered; sequence SEESEWTENSFQGGQEDGGDDKETHGECKRPWPQHQCSAPADL. Basic and acidic residues predominate over residues 515-524; that stretch reads DKETHGECKR. Ser-532 and Ser-545 each carry phosphoserine. The interval 608-627 is disordered; the sequence is VKSSLPERSGAGEPRVSFNL.

This sequence belongs to the PP2C family. Heterotrimer. Interacts with PAX1 and ARHGEF6 (or ARHGEF7). Requires Mg(2+) as cofactor. Mn(2+) is required as a cofactor.

Its subcellular location is the nucleus. The protein resides in the cytoplasm. It catalyses the reaction O-phospho-L-seryl-[protein] + H2O = L-seryl-[protein] + phosphate. The catalysed reaction is O-phospho-L-threonyl-[protein] + H2O = L-threonyl-[protein] + phosphate. Functionally, protein phosphatase that inactivates multifunctional CaM kinases such as CAMK4 and CAMK2. Dephosphorylates and inactivates PAK. May play a role in the inhibition of actin fiber stress breakdown and in morphological changes driven by TNK2/CDC42. Dephosphorylates PRKAA2. This is Protein phosphatase 1E (Ppm1e) from Mus musculus (Mouse).